A 275-amino-acid chain; its full sequence is MEPSLLLWGILTFVVVHGHVTELCDENPPDIQHATFKALTYKTGTMLNCECKKGFRRISNGSAFMLCAGNSSHSSWENQCRCISTSPRATDGQIIPKPEEQKGKSPMGMQSQMQPTDQVNLPGHCREPPPWEHEDSRRIYHFVVGQTVHYQCMQGFRALKRGPAKSVCKTTCGKATWTQPRLQCLSERSDGWFPDDEEPQASTDAALGSDTSCPSITASTTDFQRHTEVAMTTESFVFTTEYQIAVAGCVLLLISIVLLSGLTWQRRWRKSRRTI.

A signal peptide spans 1–21 (MEPSLLLWGILTFVVVHGHVT). The Sushi 1 domain maps to 22–84 (ELCDENPPDI…SWENQCRCIS (63 aa)). Over 22–243 (ELCDENPPDI…ESFVFTTEYQ (222 aa)) the chain is Extracellular. 3 cysteine pairs are disulfide-bonded: Cys-24/Cys-67, Cys-49/Cys-80, and Cys-51/Cys-82. Residues Asn-60 and Asn-70 are each glycosylated (N-linked (GlcNAc...) asparagine). Residues 91–118 (DGQIIPKPEEQKGKSPMGMQSQMQPTDQ) form a disordered region. Over residues 108-118 (GMQSQMQPTDQ) the composition is skewed to polar residues. One can recognise a Sushi 2 domain in the interval 123-186 (GHCREPPPWE…WTQPRLQCLS (64 aa)). Intrachain disulfides connect Cys-125–Cys-168 and Cys-152–Cys-184. A disordered region spans residues 188–213 (RSDGWFPDDEEPQASTDAALGSDTSC). Residues 244–262 (IAVAGCVLLLISIVLLSGL) traverse the membrane as a helical segment. Over 263-275 (TWQRRWRKSRRTI) the chain is Cytoplasmic.

As to quaternary structure, non-covalent dimer of an alpha and a beta subunit. IL2R exists in 3 different forms: a high affinity dimer, an intermediate affinity monomer (beta subunit), and a low affinity monomer (alpha subunit). The high and intermediate affinity forms also associate with a gamma subunit.

The protein resides in the membrane. Functionally, receptor for interleukin-2. The receptor is involved in the regulation of immune tolerance by controlling regulatory T cells (TREGs) activity. TREGs suppress the activation and expansion of autoreactive T-cells. The chain is Interleukin-2 receptor subunit alpha (IL2RA) from Felis catus (Cat).